We begin with the raw amino-acid sequence, 609 residues long: 1-deoxy-D-xylulose-5-phosphate synthase (609 aa).

Residues histidine 77 and glycine 118–serine 120 contribute to the thiamine diphosphate site. Aspartate 149 contributes to the Mg(2+) binding site. Thiamine diphosphate-binding positions include glycine 150 to alanine 151, asparagine 178, tyrosine 259, and glutamate 342. Asparagine 178 serves as a coordination point for Mg(2+).

This sequence belongs to the transketolase family. DXPS subfamily. As to quaternary structure, homodimer. Mg(2+) is required as a cofactor. Requires thiamine diphosphate as cofactor.

The catalysed reaction is D-glyceraldehyde 3-phosphate + pyruvate + H(+) = 1-deoxy-D-xylulose 5-phosphate + CO2. It participates in metabolic intermediate biosynthesis; 1-deoxy-D-xylulose 5-phosphate biosynthesis; 1-deoxy-D-xylulose 5-phosphate from D-glyceraldehyde 3-phosphate and pyruvate: step 1/1. Its function is as follows. Catalyzes the acyloin condensation reaction between C atoms 2 and 3 of pyruvate and glyceraldehyde 3-phosphate to yield 1-deoxy-D-xylulose-5-phosphate (DXP). In Listeria monocytogenes serotype 4b (strain CLIP80459), this protein is 1-deoxy-D-xylulose-5-phosphate synthase.